Here is a 278-residue protein sequence, read N- to C-terminus: Glutamate racemase (278 aa).

Substrate is bound by residues 25 to 26 (DS) and 57 to 58 (YG). Cysteine 89 serves as the catalytic Proton donor/acceptor. 90–91 (NT) contributes to the substrate binding site. Residue cysteine 204 is the Proton donor/acceptor of the active site. 205 to 206 (TH) is a binding site for substrate.

Belongs to the aspartate/glutamate racemases family.

It carries out the reaction L-glutamate = D-glutamate. The protein operates within cell wall biogenesis; peptidoglycan biosynthesis. In terms of biological role, provides the (R)-glutamate required for cell wall biosynthesis. The chain is Glutamate racemase from Brucella anthropi (strain ATCC 49188 / DSM 6882 / CCUG 24695 / JCM 21032 / LMG 3331 / NBRC 15819 / NCTC 12168 / Alc 37) (Ochrobactrum anthropi).